A 216-amino-acid polypeptide reads, in one-letter code: Small ribosomal subunit protein uS5 (216 aa).

The S5 DRBM domain occupies 51-114 (LEEEVIDVNL…DDAKFNIIKV (64 aa)).

It belongs to the universal ribosomal protein uS5 family. In terms of assembly, part of the 30S ribosomal subunit. Contacts protein S4.

In terms of biological role, with S4 and S12 plays an important role in translational accuracy. The protein is Small ribosomal subunit protein uS5 of Methanothermobacter thermautotrophicus (strain ATCC 29096 / DSM 1053 / JCM 10044 / NBRC 100330 / Delta H) (Methanobacterium thermoautotrophicum).